The primary structure comprises 325 residues: MVITKGVTALLVSFFVALGGGRVLIPWLLKLKIGQTVRTEGPKRHLKKSGTPTMGGIIFLLSLVVTVVVFQAFDAKTLLLLITTLLFGLLGFLDDYLKVVLRRPLGLRAREKLLGQVIFSLVLTFGAVAFLGRGTDWYIPFSRLLLGEPRYLELGNVFFFAATIFIMVGFANAVNLTDGVDGLCSSVTLIVMSFFAMTSLALKEKGLFIFALALMGGLVGFLVYNRHPAKVFMGDTGSLALGAAVAGFAVLTQTELFLLLVGLIYVVETLSVIIQVIVYQLTGKRVFKMSPLHHHFELSGWSENKIVLVFSLVTLIMVLISGYGL.

A run of 10 helical transmembrane segments spans residues 9–29 (ALLV…PWLL), 53–73 (TMGG…FQAF), 77–97 (TLLL…DDYL), 112–132 (KLLG…AFLG), 154–174 (LGNV…ANAV), 182–202 (GLCS…SLAL), 204–224 (EKGL…FLVY), 231–251 (VFMG…FAVL), 257–277 (FLLL…IQVI), and 305–325 (KIVL…GYGL).

It belongs to the glycosyltransferase 4 family. MraY subfamily. Requires Mg(2+) as cofactor.

It is found in the cell membrane. The catalysed reaction is UDP-N-acetyl-alpha-D-muramoyl-L-alanyl-gamma-D-glutamyl-meso-2,6-diaminopimeloyl-D-alanyl-D-alanine + di-trans,octa-cis-undecaprenyl phosphate = di-trans,octa-cis-undecaprenyl diphospho-N-acetyl-alpha-D-muramoyl-L-alanyl-D-glutamyl-meso-2,6-diaminopimeloyl-D-alanyl-D-alanine + UMP. The protein operates within cell wall biogenesis; peptidoglycan biosynthesis. Functionally, catalyzes the initial step of the lipid cycle reactions in the biosynthesis of the cell wall peptidoglycan: transfers peptidoglycan precursor phospho-MurNAc-pentapeptide from UDP-MurNAc-pentapeptide onto the lipid carrier undecaprenyl phosphate, yielding undecaprenyl-pyrophosphoryl-MurNAc-pentapeptide, known as lipid I. The protein is Phospho-N-acetylmuramoyl-pentapeptide-transferase of Carboxydothermus hydrogenoformans (strain ATCC BAA-161 / DSM 6008 / Z-2901).